Here is a 288-residue protein sequence, read N- to C-terminus: Thymidylate synthase (288 aa).

R21 contributes to the dUMP binding site. A (6R)-5,10-methylene-5,6,7,8-tetrahydrofolate-binding site is contributed by N51. Position 150-151 (150-151 (RR)) interacts with dUMP. Catalysis depends on C170, which acts as the Nucleophile. DUMP contacts are provided by residues 190–193 (RSGD), N201, and 231–233 (HIY). D193 provides a ligand contact to (6R)-5,10-methylene-5,6,7,8-tetrahydrofolate. Residue A287 participates in (6R)-5,10-methylene-5,6,7,8-tetrahydrofolate binding.

It belongs to the thymidylate synthase family. Bacterial-type ThyA subfamily. In terms of assembly, homodimer.

It is found in the cytoplasm. It catalyses the reaction dUMP + (6R)-5,10-methylene-5,6,7,8-tetrahydrofolate = 7,8-dihydrofolate + dTMP. It functions in the pathway pyrimidine metabolism; dTTP biosynthesis. Its function is as follows. Catalyzes the reductive methylation of 2'-deoxyuridine-5'-monophosphate (dUMP) to 2'-deoxythymidine-5'-monophosphate (dTMP) while utilizing 5,10-methylenetetrahydrofolate (mTHF) as the methyl donor and reductant in the reaction, yielding dihydrofolate (DHF) as a by-product. This enzymatic reaction provides an intracellular de novo source of dTMP, an essential precursor for DNA biosynthesis. The sequence is that of Thymidylate synthase from Aster yellows witches'-broom phytoplasma (strain AYWB).